The primary structure comprises 460 residues: Inactive ubiquitin carboxyl-terminal hydrolase MINDY-4B (460 aa).

A disordered region spans residues 41-76 (TNNSTPQNHEGNHTSADENEDGTGLSQPKGQGHLPS).

The protein belongs to the MINDY deubiquitinase family. FAM188 subfamily.

The sequence is that of Inactive ubiquitin carboxyl-terminal hydrolase MINDY-4B from Homo sapiens (Human).